The primary structure comprises 363 residues: Aminomethyltransferase (363 aa).

It belongs to the GcvT family. The glycine cleavage system is composed of four proteins: P, T, L and H.

It carries out the reaction N(6)-[(R)-S(8)-aminomethyldihydrolipoyl]-L-lysyl-[protein] + (6S)-5,6,7,8-tetrahydrofolate = N(6)-[(R)-dihydrolipoyl]-L-lysyl-[protein] + (6R)-5,10-methylene-5,6,7,8-tetrahydrofolate + NH4(+). In terms of biological role, the glycine cleavage system catalyzes the degradation of glycine. The polypeptide is Aminomethyltransferase (Thioalkalivibrio sulfidiphilus (strain HL-EbGR7)).